We begin with the raw amino-acid sequence, 323 residues long: Transmembrane protein 171 (323 aa).

The next 4 helical transmembrane spans lie at 22–42 (IFFLFVFGAVLLCVGVLISIF), 57–77 (MVLKIAGPSCAVMGLGTVILA), 112–132 (LIFGFLFLTSGMLISILGIWV), and 159–179 (FLSLQIMGPLIVLVGLCFFVV). The segment covering 251–268 (YSSLFNLSRTPTPENQGA) has biased composition (polar residues). Positions 251-323 (YSSLFNLSRT…LGAPSESSPP (73 aa)) are disordered. The segment covering 281–290 (SGPGSSSESS) has biased composition (low complexity).

The protein localises to the membrane. This chain is Transmembrane protein 171 (Tmem171), found in Rattus norvegicus (Rat).